The chain runs to 276 residues: 2,3,4,5-tetrahydropyridine-2,6-dicarboxylate N-succinyltransferase (276 aa).

Residues Arg-104 and Asp-141 each coordinate substrate.

It belongs to the transferase hexapeptide repeat family. Homotrimer.

It localises to the cytoplasm. The enzyme catalyses (S)-2,3,4,5-tetrahydrodipicolinate + succinyl-CoA + H2O = (S)-2-succinylamino-6-oxoheptanedioate + CoA. Its pathway is amino-acid biosynthesis; L-lysine biosynthesis via DAP pathway; LL-2,6-diaminopimelate from (S)-tetrahydrodipicolinate (succinylase route): step 1/3. The polypeptide is 2,3,4,5-tetrahydropyridine-2,6-dicarboxylate N-succinyltransferase (Legionella pneumophila (strain Corby)).